A 102-amino-acid chain; its full sequence is MEFEDLDVVLYVFFENPEMKSFEFEFKQLFETTESGLRYLIGVPDSRNKIKNNNEIIEEFIYYQNDDIVTKLIFYYTKGTNRIYIRKIYGWKEKRLESEDEE.

This is an uncharacterized protein from Sulfolobus islandicus rod-shaped virus 1 (SIRV-1).